We begin with the raw amino-acid sequence, 77 residues long: Acyl carrier protein (77 aa).

The Carrier domain maps to 2-77 (SSIEKRVKEI…DAIDYITEHT (76 aa)). Residue serine 37 is modified to O-(pantetheine 4'-phosphoryl)serine.

It belongs to the acyl carrier protein (ACP) family. 4'-phosphopantetheine is transferred from CoA to a specific serine of apo-ACP by AcpS. This modification is essential for activity because fatty acids are bound in thioester linkage to the sulfhydryl of the prosthetic group.

It localises to the cytoplasm. It functions in the pathway lipid metabolism; fatty acid biosynthesis. In terms of biological role, carrier of the growing fatty acid chain in fatty acid biosynthesis. This chain is Acyl carrier protein, found in Geobacter sulfurreducens (strain ATCC 51573 / DSM 12127 / PCA).